The chain runs to 577 residues: Arginine--tRNA ligase (577 aa).

The short motif at 122–132 (PNVAKEMHVGH) is the 'HIGH' region element.

Belongs to the class-I aminoacyl-tRNA synthetase family. As to quaternary structure, monomer.

It is found in the cytoplasm. It carries out the reaction tRNA(Arg) + L-arginine + ATP = L-arginyl-tRNA(Arg) + AMP + diphosphate. This is Arginine--tRNA ligase from Escherichia fergusonii (strain ATCC 35469 / DSM 13698 / CCUG 18766 / IAM 14443 / JCM 21226 / LMG 7866 / NBRC 102419 / NCTC 12128 / CDC 0568-73).